We begin with the raw amino-acid sequence, 896 residues long: FHIP family protein C05D11.8 (896 aa).

The tract at residues 823-865 (STASSPRTSDDHDPTLFYGRSTMAPPGRKPLLREPSRQETLDD) is disordered. A compositionally biased stretch (basic and acidic residues) spans 853–865 (LLREPSRQETLDD).

The protein belongs to the FHIP family.

This Caenorhabditis elegans protein is FHIP family protein C05D11.8.